The primary structure comprises 586 residues: U-box domain-containing protein 73 (586 aa).

Residues 21-122 (KADMSGLQRS…AAGADDGPTR (102 aa)) are disordered. The segment covering 50–60 (RSAPTSPLRTP) has biased composition (low complexity). The U-box domain maps to 182-258 (PIPIAHDGTL…SAWCLDHSDL (77 aa)).

The catalysed reaction is S-ubiquitinyl-[E2 ubiquitin-conjugating enzyme]-L-cysteine + [acceptor protein]-L-lysine = [E2 ubiquitin-conjugating enzyme]-L-cysteine + N(6)-ubiquitinyl-[acceptor protein]-L-lysine.. It functions in the pathway protein modification; protein ubiquitination. Functionally, possesses E3 ubiquitin-protein ligase in vitro. This chain is U-box domain-containing protein 73 (PUB73), found in Oryza sativa subsp. japonica (Rice).